Consider the following 268-residue polypeptide: Small ribosomal subunit protein eS1 (268 aa).

The tract at residues 1–21 (MAVGKNKGLSKGGKKGGKKKV) is disordered.

It belongs to the eukaryotic ribosomal protein eS1 family. Component of the small ribosomal subunit. Mature ribosomes consist of a small (40S) and a large (60S) subunit. The 40S subunit contains about 33 different proteins and 1 molecule of RNA (18S). The 60S subunit contains about 49 different proteins and 3 molecules of RNA (28S, 5.8S and 5S).

It is found in the cytoplasm. In terms of biological role, essential for oogenesis; required for late follicle cell development. The polypeptide is Small ribosomal subunit protein eS1 (Drosophila sechellia (Fruit fly)).